Here is a 446-residue protein sequence, read N- to C-terminus: Adenylosuccinate synthetase (446 aa).

Residues 20 to 26 (GDEGKGK) and 48 to 50 (GHT) each bind GTP. The active-site Proton acceptor is Asp21. Residues Asp21 and Gly48 each coordinate Mg(2+). IMP-binding positions include 21-24 (DEGK), 46-49 (NAGH), Thr137, Arg151, Gln232, Thr247, and Arg319. His49 serves as the catalytic Proton donor. 315–321 (SVTGRPR) serves as a coordination point for substrate. Residues Arg321, 347-349 (KLD), and 429-431 (STG) contribute to the GTP site.

This sequence belongs to the adenylosuccinate synthetase family. As to quaternary structure, homodimer. Mg(2+) serves as cofactor.

Its subcellular location is the cytoplasm. It catalyses the reaction IMP + L-aspartate + GTP = N(6)-(1,2-dicarboxyethyl)-AMP + GDP + phosphate + 2 H(+). Its pathway is purine metabolism; AMP biosynthesis via de novo pathway; AMP from IMP: step 1/2. Plays an important role in the de novo pathway of purine nucleotide biosynthesis. Catalyzes the first committed step in the biosynthesis of AMP from IMP. The chain is Adenylosuccinate synthetase from Polynucleobacter necessarius subsp. necessarius (strain STIR1).